The following is a 154-amino-acid chain: Myoglobin (154 aa).

A Globin domain is found at 2 to 148 (GLSDGEWQLV…FRNDMAAKYK (147 aa)). Residue S4 is modified to Phosphoserine. H65 contributes to the nitrite binding site. An O2-binding site is contributed by H65. T68 carries the post-translational modification Phosphothreonine. H94 lines the heme b pocket.

Belongs to the globin family. Monomeric.

Its subcellular location is the cytoplasm. It is found in the sarcoplasm. The enzyme catalyses Fe(III)-heme b-[protein] + nitric oxide + H2O = Fe(II)-heme b-[protein] + nitrite + 2 H(+). The catalysed reaction is H2O2 + AH2 = A + 2 H2O. Monomeric heme protein which primary function is to store oxygen and facilitate its diffusion within muscle tissues. Reversibly binds oxygen through a pentacoordinated heme iron and enables its timely and efficient release as needed during periods of heightened demand. Depending on the oxidative conditions of tissues and cells, and in addition to its ability to bind oxygen, it also has a nitrite reductase activity whereby it regulates the production of bioactive nitric oxide. Under stress conditions, like hypoxia and anoxia, it also protects cells against reactive oxygen species thanks to its pseudoperoxidase activity. This is Myoglobin (MB) from Macaca fascicularis (Crab-eating macaque).